The sequence spans 276 residues: NADPH-dependent 7-cyano-7-deazaguanine reductase (276 aa).

83 to 85 serves as a coordination point for substrate; the sequence is IES. 85–86 is a binding site for NADPH; the sequence is SK. The active-site Thioimide intermediate is the Cys-184. Asp-191 acts as the Proton donor in catalysis. 223–224 is a binding site for substrate; that stretch reads HE. 252 to 253 is an NADPH binding site; sequence RG.

Belongs to the GTP cyclohydrolase I family. QueF type 2 subfamily. As to quaternary structure, homodimer.

The protein localises to the cytoplasm. The enzyme catalyses 7-aminomethyl-7-carbaguanine + 2 NADP(+) = 7-cyano-7-deazaguanine + 2 NADPH + 3 H(+). It functions in the pathway tRNA modification; tRNA-queuosine biosynthesis. Its function is as follows. Catalyzes the NADPH-dependent reduction of 7-cyano-7-deazaguanine (preQ0) to 7-aminomethyl-7-deazaguanine (preQ1). In Pseudomonas entomophila (strain L48), this protein is NADPH-dependent 7-cyano-7-deazaguanine reductase.